A 358-amino-acid chain; its full sequence is UPF0324 membrane protein CT0845 (358 aa).

The next 10 membrane-spanning stretches (helical) occupy residues 36-53 (YFPG…ATFL), 57-76 (YGAP…RFLS), 83-105 (LVGI…GMRI), 115-134 (VKPV…FGLA), 146-168 (GVLT…AAVL), 178-200 (TIFT…PVVA), 244-261 (LLRV…SLIF), 276-295 (LLPP…SLGV), 307-325 (VSRW…KTSL), and 335-357 (PVSI…VVWM).

It belongs to the UPF0324 family.

It is found in the cell membrane. This chain is UPF0324 membrane protein CT0845, found in Chlorobaculum tepidum (strain ATCC 49652 / DSM 12025 / NBRC 103806 / TLS) (Chlorobium tepidum).